The primary structure comprises 277 residues: Protein CMSS1 (277 aa).

Positions 1–14 (MADDLGNEWWEEPA) are enriched in acidic residues. Residues 1-91 (MADDLGNEWW…QHAPTAGTPE (91 aa)) are disordered. Over residues 24-34 (EEVKESEESKG) the composition is skewed to basic and acidic residues. Positions 35–52 (NKKKKIPSGKTQVKRKKE) are enriched in basic residues. A compositionally biased stretch (basic and acidic residues) spans 53–66 (VKVSQEAEKEDSAP).

Belongs to the CMS1 family.

In Xenopus laevis (African clawed frog), this protein is Protein CMSS1 (cmss1).